Here is a 201-residue protein sequence, read N- to C-terminus: 3-isopropylmalate dehydratase small subunit (201 aa).

It belongs to the LeuD family. LeuD type 1 subfamily. In terms of assembly, heterodimer of LeuC and LeuD.

It carries out the reaction (2R,3S)-3-isopropylmalate = (2S)-2-isopropylmalate. It functions in the pathway amino-acid biosynthesis; L-leucine biosynthesis; L-leucine from 3-methyl-2-oxobutanoate: step 2/4. Functionally, catalyzes the isomerization between 2-isopropylmalate and 3-isopropylmalate, via the formation of 2-isopropylmaleate. The chain is 3-isopropylmalate dehydratase small subunit from Glaesserella parasuis serovar 5 (strain SH0165) (Haemophilus parasuis).